The chain runs to 108 residues: Putative pterin-4-alpha-carbinolamine dehydratase (108 aa).

Belongs to the pterin-4-alpha-carbinolamine dehydratase family.

The catalysed reaction is (4aS,6R)-4a-hydroxy-L-erythro-5,6,7,8-tetrahydrobiopterin = (6R)-L-erythro-6,7-dihydrobiopterin + H2O. The chain is Putative pterin-4-alpha-carbinolamine dehydratase from Bordetella avium (strain 197N).